The chain runs to 1188 residues: Spermatogenesis-associated protein 31C1 (1188 aa).

The helical transmembrane segment at 23-43 (PWVLDIFLTLVFALGLFFLLL) threads the bilayer. 8 disordered regions span residues 57-92 (PSPR…KNHS), 121-249 (LEKG…LLTP), 483-510 (PGTS…EAQT), 530-567 (TPQN…DSGS), 733-813 (MPER…PTVP), 934-1013 (NMGH…PSIS), 1121-1143 (QQAT…QQPL), and 1155-1188 (LRHP…HHHH). Composition is skewed to basic residues over residues 59 to 68 (PRKRKRHLVS) and 80 to 92 (RRGR…KNHS). Over residues 138–154 (VGKRTPDGASRSSHEPM) the composition is skewed to basic and acidic residues. Residues 191–207 (SSLSASQPPEPSLLLER) are compositionally biased toward low complexity. Residues 210–241 (PEPPALFPHPPHTPDPLACSPPPPKGFTPPPL) are compositionally biased toward pro residues. Residues 495–510 (WQSSTSTGESSKEAQT) are compositionally biased toward polar residues. Polar residues-rich tracts occupy residues 783–800 (LKGS…SSRA) and 943–954 (PNCQGSCKSQSP). The segment covering 960–976 (HKRENSRKPNLEKHEEM) has biased composition (basic and acidic residues). The segment covering 1121-1130 (QQATLKNQSR) has biased composition (polar residues).

Belongs to the SPATA31 family.

It localises to the membrane. Functionally, may play a role in spermatogenesis. This Homo sapiens (Human) protein is Spermatogenesis-associated protein 31C1 (SPATA31C1).